A 148-amino-acid chain; its full sequence is 3-hydroxyacyl-[acyl-carrier-protein] dehydratase FabZ (148 aa).

H47 is a catalytic residue.

Belongs to the thioester dehydratase family. FabZ subfamily.

It is found in the cytoplasm. It carries out the reaction a (3R)-hydroxyacyl-[ACP] = a (2E)-enoyl-[ACP] + H2O. In terms of biological role, involved in unsaturated fatty acids biosynthesis. Catalyzes the dehydration of short chain beta-hydroxyacyl-ACPs and long chain saturated and unsaturated beta-hydroxyacyl-ACPs. The polypeptide is 3-hydroxyacyl-[acyl-carrier-protein] dehydratase FabZ (Hydrogenobaculum sp. (strain Y04AAS1)).